We begin with the raw amino-acid sequence, 1163 residues long: AF4/FMR2 family member 4 (1163 aa).

The segment covering 1 to 19 has biased composition (basic and acidic residues); it reads MNREDRNVLRMKERERRNQ. 4 disordered regions span residues 1–48, 76–312, 324–904, and 1034–1073; these read MNRE…EDKL, AIPK…ASGD, THSW…PRRT, and NSYN…SSGA. Residues 115 to 128 show a composition bias toward polar residues; that stretch reads PSTSQSQKRSSGLQ. A Phosphoserine modification is found at S120. Composition is skewed to low complexity over residues 129 to 148 and 177 to 194; these read SGHS…NSSG and RSSS…NSSH. Positions 198 to 217 are enriched in basic and acidic residues; that stretch reads HGNDHHSKEHQRSKSPRDPD. Phosphoserine is present on S212. Polar residues-rich tracts occupy residues 227–251, 273–285, and 350–375; these read PFSS…SMLQ, EHYS…NSMT, and KESQ…NGHQ. Phosphoserine occurs at positions 387, 388, 389, and 392. The segment covering 403-412 has biased composition (polar residues); that stretch reads PRSTPGSNSE. Over residues 413-429 the composition is skewed to basic and acidic residues; that stretch reads PSHHNSEGADNSRDDSS. A compositionally biased stretch (low complexity) spans 430 to 462; the sequence is SHSGSESSSGSDSESESSSSDSEANEPSQSASP. S487, S490, and S491 each carry phosphoserine. Polar residues-rich tracts occupy residues 488–501, 510–528, and 549–560; these read PASS…SSQG, GTGN…SSAT, and SPAQSDSTTQRR. S549 bears the Phosphoserine mark. The segment covering 568–586 has biased composition (basic and acidic residues); it reads KKAEKAAAEEPRGGLKIES. Residue K583 forms a Glycyl lysine isopeptide (Lys-Gly) (interchain with G-Cter in SUMO2) linkage. Residues 599–612 are compositionally biased toward basic residues; the sequence is SRHKAATKGSRKPN. Basic and acidic residues predominate over residues 613–627; sequence IKKESKSSPRPTAEK. The residue at position 671 (S671) is a Phosphoserine. Phosphothreonine is present on T674. A phosphoserine mark is found at S680, S694, S703, and S706. Residue Y712 is modified to Phosphotyrosine. 3 stretches are compositionally biased toward basic and acidic residues: residues 730 to 761, 769 to 789, and 799 to 811; these read PYKE…EKVS, KNED…DKNS, and ESSK…EKDL. Phosphoserine is present on S814. K822 bears the N6-acetyllysine mark. S836, S1043, S1055, S1058, and S1062 each carry phosphoserine. A compositionally biased stretch (low complexity) spans 836–862; that stretch reads SQSSSLKSSSNSNKETSGSSKNSSSTS. The span at 1062 to 1073 shows a compositional bias: low complexity; it reads SPGNSGNYSSGA.

It belongs to the AF4 family. Component of the super elongation complex (SEC), at least composed of EAF1, EAF2, CDK9, MLLT3/AF9, AFF (AFF1 or AFF4), the P-TEFb complex and ELL (ELL, ELL2 or ELL3). Interacts with ELL3; the interaction is direct. Interacts with ELL2; the interaction is direct and leads to stabilize ELL2 and prevent ELL2 ubiquitination and degradation. In terms of processing, dephosphorylated at Ser-549 by the PNUTS-PP1 complex, promoting RNA polymerase II transcription pause-release. Ubiquitously expressed. Strongly expressed in heart, placenta, skeletal muscle, pancreas and to a lower extent in brain.

It localises to the nucleus. The protein localises to the chromosome. Its function is as follows. Key component of the super elongation complex (SEC), a complex required to increase the catalytic rate of RNA polymerase II transcription by suppressing transient pausing by the polymerase at multiple sites along the DNA. In the SEC complex, AFF4 acts as a central scaffold that recruits other factors through direct interactions with ELL proteins (ELL, ELL2 or ELL3) and the P-TEFb complex. In case of infection by HIV-1 virus, the SEC complex is recruited by the viral Tat protein to stimulate viral gene expression. In Homo sapiens (Human), this protein is AF4/FMR2 family member 4 (AFF4).